A 487-amino-acid polypeptide reads, in one-letter code: ATP synthase subunit beta (487 aa).

171–178 lines the ATP pocket; sequence GGAGVGKT.

Belongs to the ATPase alpha/beta chains family. As to quaternary structure, F-type ATPases have 2 components, CF(1) - the catalytic core - and CF(0) - the membrane proton channel. CF(1) has five subunits: alpha(3), beta(3), gamma(1), delta(1), epsilon(1). CF(0) has three main subunits: a(1), b(2) and c(9-12). The alpha and beta chains form an alternating ring which encloses part of the gamma chain. CF(1) is attached to CF(0) by a central stalk formed by the gamma and epsilon chains, while a peripheral stalk is formed by the delta and b chains.

It is found in the cell membrane. The enzyme catalyses ATP + H2O + 4 H(+)(in) = ADP + phosphate + 5 H(+)(out). In terms of biological role, produces ATP from ADP in the presence of a proton gradient across the membrane. The catalytic sites are hosted primarily by the beta subunits. The polypeptide is ATP synthase subunit beta (Leifsonia xyli subsp. xyli (strain CTCB07)).